The chain runs to 476 residues: MAYLKVSGTKIVDKDGNEVILRGAGLGGWMNMENFITGYPGCEFQIRAALADVVGQEKSEFFFDKFLEYFFTDADAAFFKSLGLNCIRLPFNYRHFEDDMNPRVLKPEGFKHLDRVIDICAKHGIYTVLDLHTAPGGQNTDWHSDAGTHIAKFWEHKDFQDRVIWLWEELAQHYRDNTWIAGYNPLNEPTDPYQTRLIAWYDRVYAAIRKHDPHHALFLDGNTFASDFSHFGDAEKRWENTAYAIHDYSVFGFPAAPEPYVSSEAQRRRLRRSYEKKREWMDARGLCVWNGEFGPVYARREYEGDLTDSINEERYRVLKDQLEIYNKDRLSWSIWLYKDIGFQGMVHVSRDTPYMTLFRDFLAKKHRLAIDAWGADDSAVRHVYQPLIDLIKQEVKPEHQELYPAPVWKLSDRVGRLARNILVSEFLVREWAEHFRGKSTEELDAIAKSFAFENCLHRDGLNKVLTDNASLVAQGA.

The active-site Proton donor is glutamate 188. Glutamate 292 functions as the Nucleophile in the catalytic mechanism. Residue asparagine 468 is glycosylated (N-linked (GlcNAc...) asparagine).

Belongs to the glycosyl hydrolase 5 (cellulase A) family.

The protein localises to the secreted. The catalysed reaction is Hydrolysis of (1-&gt;4)-beta-D-xylans, to remove successive D-xylose residues from the non-reducing termini.. In terms of biological role, catalyzes the hydrolysis of xylo-oligomers to xylose units and plays an important role in xylan degradation. Can also perform the transglycosylation of xylose and alcohol. Has no endoglucanase activity. The protein is Beta-xylosidase of Phanerodontia chrysosporium (White-rot fungus).